The chain runs to 466 residues: Carboxy-terminal processing protease CtpA (466 aa).

Positions 1–36 (MKRQLKLFFIVLITAVVASALTLFITGNSSILGQKS) are cleaved as a signal peptide. The 79-residue stretch at 96-174 (DETISASFEG…TKVKLELNRA (79 aa)) folds into the PDZ domain. Catalysis depends on charge relay system residues serine 297, glutamate 308, and lysine 322.

This sequence belongs to the peptidase S41A family.

It carries out the reaction The enzyme shows specific recognition of a C-terminal tripeptide, Xaa-Yaa-Zaa, in which Xaa is preferably Ala or Leu, Yaa is preferably Ala or Tyr, and Zaa is preferably Ala, but then cleaves at a variable distance from the C-terminus. A typical cleavage is -Ala-Ala-|-Arg-Ala-Ala-Lys-Glu-Asn-Tyr-Ala-Leu-Ala-Ala.. This Bacillus subtilis (strain 168) protein is Carboxy-terminal processing protease CtpA (ctpA).